The following is a 113-amino-acid chain: T cell receptor alpha variable 36/delta variable 7 (113 aa).

A signal peptide spans 1-21 (MMKCPQALLAIFWLLLSWVSS). The Ig-like domain occupies 23–113 (DKVVQSPLSL…DSAIYLCAVE (91 aa)). N-linked (GlcNAc...) asparagine glycans are attached at residues Asn-43 and Asn-96. A disulfide bond links Cys-44 and Cys-110.

Alpha-beta TR is a heterodimer composed of an alpha and beta chain; disulfide-linked. The alpha-beta TR is associated with the transmembrane signaling CD3 coreceptor proteins to form the TR-CD3 (TcR or TCR). The assembly of alpha-beta TR heterodimers with CD3 occurs in the endoplasmic reticulum where a single alpha-beta TR heterodimer associates with one CD3D-CD3E heterodimer, one CD3G-CD3E heterodimer and one CD247 homodimer forming a stable octameric structure. CD3D-CD3E and CD3G-CD3E heterodimers preferentially associate with TR alpha and TR beta chains, respectively. The association of the CD247 homodimer is the last step of TcR assembly in the endoplasmic reticulum and is required for transport to the cell surface.

The protein resides in the cell membrane. In terms of biological role, v region of the variable domain of T cell receptor (TR) alpha chain that participates in the antigen recognition. Alpha-beta T cell receptors are antigen specific receptors which are essential to the immune response and are present on the cell surface of T lymphocytes. Recognize peptide-major histocompatibility (MH) (pMH) complexes that are displayed by antigen presenting cells (APC), a prerequisite for efficient T cell adaptive immunity against pathogens. Binding of alpha-beta TR to pMH complex initiates TR-CD3 clustering on the cell surface and intracellular activation of LCK that phosphorylates the ITAM motifs of CD3G, CD3D, CD3E and CD247 enabling the recruitment of ZAP70. In turn ZAP70 phosphorylates LAT, which recruits numerous signaling molecules to form the LAT signalosome. The LAT signalosome propagates signal branching to three major signaling pathways, the calcium, the mitogen-activated protein kinase (MAPK) kinase and the nuclear factor NF-kappa-B (NF-kB) pathways, leading to the mobilization of transcription factors that are critical for gene expression and essential for T cell growth and differentiation. The T cell repertoire is generated in the thymus, by V-(D)-J rearrangement. This repertoire is then shaped by intrathymic selection events to generate a peripheral T cell pool of self-MH restricted, non-autoaggressive T cells. Post-thymic interaction of alpha-beta TR with the pMH complexes shapes TR structural and functional avidity. This chain is T cell receptor alpha variable 36/delta variable 7, found in Homo sapiens (Human).